Here is a 311-residue protein sequence, read N- to C-terminus: T-cell immunomodulatory protein (311 aa).

Residues Asn-52, Asn-70, and Asn-181 are each glycosylated (N-linked (GlcNAc...) asparagine). A helical membrane pass occupies residues 266-286 (VLLTAIALIGVCVFILAIIGI).

It belongs to the TIP family. Interacts with RUVBL1, RUVBL2 and alpha-tubulin.

The protein resides in the secreted. The protein localises to the cell membrane. Functionally, modulator of T-cell function. Has a protective effect in graft versus host disease model. The polypeptide is T-cell immunomodulatory protein (Macaca fascicularis (Crab-eating macaque)).